The chain runs to 1077 residues: Adenylate cyclase type 4 (1077 aa).

Residues 1-28 are Cytoplasmic-facing; that stretch reads MARLFSPRPPPSEDLFYETYYSLSQQYP. A run of 6 helical transmembrane segments spans residues 29-50, 61-80, 94-117, 120-138, 141-162, and 170-190; these read LLLLLLGIVLCALAALLAVAWA, FLTTVLCALGGFSLLLGLAS, GLVWVALLALGHAFLFTGGVVSAW, VSYFLFVIFTAYAMLPLGM, AAVAGLASSLSHLLVLGLYLGP, and LLPQLAANAVLFLCGNVAGVY. Residues 191 to 585 are Cytoplasmic-facing; it reads HKALMERALR…YRLSAIPAFK (395 aa). Positions 278, 279, and 322 each coordinate Mg(2+). ATP contacts are provided by residues 278-283, 320-322, and Arg366; these read DIVGFT and LGD. Residue Ser520 is modified to Phosphoserine. At Thr536 the chain carries Phosphothreonine. Helical transmembrane passes span 586–607, 611–633, and 664–687; these read YYEACTFLVFLSNFIIQMLVTN, ALAITYSITFLLFLLILFVCFSE, and IALGTATILLVFAMAITSLFFFPT. Residues 688 to 714 are Extracellular-facing; the sequence is SSDCPFQAPNVSSMISNLSWELPGSLP. Asn697 and Asn704 each carry an N-linked (GlcNAc...) asparagine glycan. 3 helical membrane-spanning segments follow: residues 715-736, 744-764, and 791-807; these read LISVPYSMHCCTLGFLSCSLFL, LLLLLLWLAASCSLFLHSHAW, and MGAISFFIFFFTLLVLA. The Cytoplasmic segment spans residues 808–1077; that stretch reads RQNEYYCRLD…RTGPPSATLG (270 aa). ATP contacts are provided by residues Lys925, 1005–1007, 1012–1016, and Lys1052; these read DIW and NVASR.

The protein belongs to the adenylyl cyclase class-4/guanylyl cyclase family. The cofactor is Mg(2+). Mn(2+) serves as cofactor. Detected in the zona glomerulosa and the zona fasciculata in the adrenal gland (at protein level).

It is found in the cell membrane. Its subcellular location is the cytoplasm. It carries out the reaction ATP = 3',5'-cyclic AMP + diphosphate. Its activity is regulated as follows. Activated by forskolin. Insensitive to calcium/calmodulin. Stimulated by GNAS and by the G-protein beta and gamma subunit complex. Functionally, catalyzes the formation of the signaling molecule cAMP in response to G-protein signaling. The sequence is that of Adenylate cyclase type 4 (ADCY4) from Homo sapiens (Human).